Consider the following 183-residue polypeptide: Chromophore lyase CpcT/CpeT 4 (183 aa).

This sequence belongs to the CpcT/CpeT biliprotein lyase family.

Covalently attaches a chromophore to Cys residue(s) of phycobiliproteins. The protein is Chromophore lyase CpcT/CpeT 4 of Gloeobacter violaceus (strain ATCC 29082 / PCC 7421).